A 435-amino-acid polypeptide reads, in one-letter code: Serine--tRNA ligase (435 aa).

242 to 244 (TAE) is a binding site for L-serine. 273–275 (RSE) contacts ATP. Glutamate 296 provides a ligand contact to L-serine. 360-363 (EISS) provides a ligand contact to ATP. Position 396 (serine 396) interacts with L-serine.

This sequence belongs to the class-II aminoacyl-tRNA synthetase family. Type-1 seryl-tRNA synthetase subfamily. In terms of assembly, homodimer. The tRNA molecule binds across the dimer.

Its subcellular location is the cytoplasm. The catalysed reaction is tRNA(Ser) + L-serine + ATP = L-seryl-tRNA(Ser) + AMP + diphosphate + H(+). The enzyme catalyses tRNA(Sec) + L-serine + ATP = L-seryl-tRNA(Sec) + AMP + diphosphate + H(+). It participates in aminoacyl-tRNA biosynthesis; selenocysteinyl-tRNA(Sec) biosynthesis; L-seryl-tRNA(Sec) from L-serine and tRNA(Sec): step 1/1. In terms of biological role, catalyzes the attachment of serine to tRNA(Ser). Is also able to aminoacylate tRNA(Sec) with serine, to form the misacylated tRNA L-seryl-tRNA(Sec), which will be further converted into selenocysteinyl-tRNA(Sec). The protein is Serine--tRNA ligase of Vibrio campbellii (strain ATCC BAA-1116).